A 270-amino-acid polypeptide reads, in one-letter code: Putative pyruvate, phosphate dikinase regulatory protein (270 aa).

150–157 lines the ADP pocket; it reads GPSRTSKS.

Belongs to the pyruvate, phosphate/water dikinase regulatory protein family. PDRP subfamily.

The enzyme catalyses N(tele)-phospho-L-histidyl/L-threonyl-[pyruvate, phosphate dikinase] + ADP = N(tele)-phospho-L-histidyl/O-phospho-L-threonyl-[pyruvate, phosphate dikinase] + AMP + H(+). The catalysed reaction is N(tele)-phospho-L-histidyl/O-phospho-L-threonyl-[pyruvate, phosphate dikinase] + phosphate + H(+) = N(tele)-phospho-L-histidyl/L-threonyl-[pyruvate, phosphate dikinase] + diphosphate. Functionally, bifunctional serine/threonine kinase and phosphorylase involved in the regulation of the pyruvate, phosphate dikinase (PPDK) by catalyzing its phosphorylation/dephosphorylation. In Neorickettsia sennetsu (strain ATCC VR-367 / Miyayama) (Ehrlichia sennetsu), this protein is Putative pyruvate, phosphate dikinase regulatory protein.